The primary structure comprises 240 residues: LexA repressor (240 aa).

The H-T-H motif DNA-binding region spans 26–46 (FDEMKEALDLASKSGIHRLIT). Catalysis depends on for autocatalytic cleavage activity residues serine 161 and lysine 199.

Belongs to the peptidase S24 family. As to quaternary structure, homodimer.

It catalyses the reaction Hydrolysis of Ala-|-Gly bond in repressor LexA.. Represses a number of genes involved in the response to DNA damage (SOS response), including recA and lexA. In the presence of single-stranded DNA, RecA interacts with LexA causing an autocatalytic cleavage which disrupts the DNA-binding part of LexA, leading to derepression of the SOS regulon and eventually DNA repair. The polypeptide is LexA repressor (Brucella melitensis biotype 1 (strain ATCC 23456 / CCUG 17765 / NCTC 10094 / 16M)).